The chain runs to 156 residues: Arginine repressor (156 aa).

It belongs to the ArgR family.

The protein localises to the cytoplasm. It participates in amino-acid biosynthesis; L-arginine biosynthesis [regulation]. Its function is as follows. Regulates arginine biosynthesis genes. This is Arginine repressor from Photorhabdus laumondii subsp. laumondii (strain DSM 15139 / CIP 105565 / TT01) (Photorhabdus luminescens subsp. laumondii).